The sequence spans 634 residues: DNA-directed RNA polymerase subunit gamma (634 aa).

Positions 74, 76, 89, and 92 each coordinate Zn(2+). Asp-471, Asp-473, and Asp-475 together coordinate Mg(2+).

Belongs to the RNA polymerase beta' chain family. RpoC1 subfamily. As to quaternary structure, in cyanobacteria the RNAP catalytic core is composed of 2 alpha, 1 beta, 1 beta', 1 gamma and 1 omega subunit. When a sigma factor is associated with the core the holoenzyme is formed, which can initiate transcription. The cofactor is Mg(2+). It depends on Zn(2+) as a cofactor.

It catalyses the reaction RNA(n) + a ribonucleoside 5'-triphosphate = RNA(n+1) + diphosphate. DNA-dependent RNA polymerase catalyzes the transcription of DNA into RNA using the four ribonucleoside triphosphates as substrates. This Synechococcus sp. (strain RCC307) protein is DNA-directed RNA polymerase subunit gamma.